A 1095-amino-acid polypeptide reads, in one-letter code: Solute carrier family 12 member 1 (1095 aa).

Topologically, residues 1-173 (MSVNIPSNSV…EEDVTGVVKF (173 aa)) are cytoplasmic. The short motif at 16-19 (RFQV) is the RFXV motif element. Positions 26-45 (HGSGAAMSDSTDPPHYEETS) are disordered. Residues serine 57 and serine 87 each carry the phosphoserine modification. Threonine 91, threonine 96, threonine 101, and threonine 114 each carry phosphothreonine. At serine 116 the chain carries Phosphoserine. Phosphoserine; by AMPK is present on serine 126. Serine 144 carries the post-translational modification Phosphoserine. The chain crosses the membrane as a helical span at residues 174-194 (GWVKGVLVRCMLNIWGVMLFI). Over 195 to 197 (RLS) the chain is Extracellular. Residues 198 to 218 (WIVGEAGIGLGVIIIGLSVVV) traverse the membrane as a helical segment. Topologically, residues 219 to 255 (TTLTGISMSAICTNGVVRGGGAYYLISRSLGPEFGGS) are cytoplasmic. Residues 256-276 (IGLIFRFANAVRVAMYVVGFA) form a helical membrane-spanning segment. Residues 277–298 (ETVVDLLKESDSMMVDPTNDIR) lie on the Extracellular side of the membrane. The chain crosses the membrane as a helical span at residues 299-319 (IIGSITVVILLGISVAGMEWE). The Cytoplasmic segment spans residues 320–323 (AKAQ). Residues 324–344 (VILLVILLIGIANFFIGTVIP) traverse the membrane as a helical segment. The Extracellular portion of the chain corresponds to 345–375 (SNNEKKSRGFFNYQASIFAENFGPSFTEGEG). The helical transmembrane segment at 376-396 (FFSVFAIFFPAATGILAGANI) threads the bilayer. Residues 397–413 (SGDLEDPQDAIPRGTML) lie on the Cytoplasmic side of the membrane. A helical transmembrane segment spans residues 414-434 (AIFITTVAYIGVAICVRACVV). Residues 435–546 (RDATGSMNDT…NNEPLRGYFL (112 aa)) are Extracellular-facing. Residues asparagine 442 and asparagine 452 are each glycosylated (N-linked (GlcNAc...) asparagine). The next 2 helical transmembrane spans lie at 547–567 (TFVI…APII) and 568–588 (SNFF…ASYA). Residues 589–605 (KSPGWRPAYGIYNMWVS) lie on the Extracellular side of the membrane. Residues 606–626 (LFGAILCCAVMFVINWWAAVI) traverse the membrane as a helical segment. Residues 627-1095 (TYVIELFLYI…NHKNVLTFYS (469 aa)) are Cytoplasmic-facing.

It belongs to the SLC12A transporter family. As to quaternary structure, when phosphorylated, interacts with PPP3CB. In terms of processing, phosphorylated at Ser-87, Thr-96 and Thr-101 by OXSR1/OSR1 and STK39/SPAK downstream of WNK kinases (WNK1, WNK2, WNK3 or WNK4), promoting its activity. In terms of tissue distribution, expressed predominantly in kidney (at protein level).

It is found in the apical cell membrane. It catalyses the reaction K(+)(out) + 2 chloride(out) + Na(+)(out) = K(+)(in) + 2 chloride(in) + Na(+)(in). Activated following phosphorylation by OXSR1/OSR1 and STK39/SPAK downstream of WNK kinases (WNK1, WNK2, WNK3 or WNK4). Renal sodium, potassium and chloride ion cotransporter that mediates the transepithelial NaCl reabsorption in the thick ascending limb and plays an essential role in the urinary concentration and volume regulation. Electrically silent transporter system. This is Solute carrier family 12 member 1 (Slc12a1) from Rattus norvegicus (Rat).